The primary structure comprises 300 residues: Acetylglutamate kinase (300 aa).

Substrate-binding positions include 68 to 69, R90, and N195; that span reads GG.

It belongs to the acetylglutamate kinase family. ArgB subfamily.

It localises to the cytoplasm. It catalyses the reaction N-acetyl-L-glutamate + ATP = N-acetyl-L-glutamyl 5-phosphate + ADP. The protein operates within amino-acid biosynthesis; L-arginine biosynthesis; N(2)-acetyl-L-ornithine from L-glutamate: step 2/4. In terms of biological role, catalyzes the ATP-dependent phosphorylation of N-acetyl-L-glutamate. The protein is Acetylglutamate kinase of Stutzerimonas stutzeri (strain A1501) (Pseudomonas stutzeri).